The sequence spans 634 residues: Kelch-like protein 22 (634 aa).

N-acetylalanine is present on Ala-2. The BTB domain maps to 50–117; it reads FDVVLVVEGK…IYTSELELSL (68 aa). 6 Kelch repeats span residues 299–349, 350–399, 400–446, 448–493, 495–544, and 545–593; these read CVVG…VLNN, FVYL…VVGK, YIYA…TLQG, MYIT…ALLD, LFVI…VLDS, and RIYV…VLTL. Phosphothreonine is present on Thr-463. Tyr-466 is subject to Phosphotyrosine. A Phosphothreonine modification is found at Thr-475. A disordered region spans residues 600–634; the sequence is EQPRGTPNRSQADADFASEVMSVSDWEEFDNSSED. Phosphothreonine is present on Thr-605. The segment covering 624–634 has biased composition (acidic residues); the sequence is DWEEFDNSSED.

In terms of assembly, component of the BCR(KLHL22) E3 ubiquitin ligase complex, at least composed of CUL3, KLHL22 and RBX1. Interacts with PLK1. Interacts with DEPDC5 (via DEP domain); the interaction depends on amino acid availability. Interacts with YWHAE; required for the nuclear localization of KLHL22 upon amino acid starvation.

Its subcellular location is the cytoplasm. The protein resides in the cytosol. It localises to the cytoskeleton. The protein localises to the microtubule organizing center. It is found in the centrosome. Its subcellular location is the spindle. The protein resides in the nucleus. It localises to the lysosome. The protein operates within protein modification; protein ubiquitination. In terms of biological role, substrate-specific adapter of a BCR (BTB-CUL3-RBX1) E3 ubiquitin ligase complex required for chromosome alignment and localization of PLK1 at kinetochores. The BCR(KLHL22) ubiquitin ligase complex mediates monoubiquitination of PLK1, leading to PLK1 dissociation from phosphoreceptor proteins and subsequent removal from kinetochores, allowing silencing of the spindle assembly checkpoint (SAC) and chromosome segregation. Monoubiquitination of PLK1 does not lead to PLK1 degradation. The BCR(KLHL22) ubiquitin ligase complex is also responsible for the amino acid-stimulated 'Lys-48' polyubiquitination and proteasomal degradation of DEPDC5. Through the degradation of DEPDC5, releases the GATOR1 complex-mediated inhibition of the TORC1 pathway. It is therefore an amino acid-dependent activator within the amino acid-sensing branch of the TORC1 pathway, indirectly regulating different cellular processes including cell growth and autophagy. In Mus musculus (Mouse), this protein is Kelch-like protein 22.